A 251-amino-acid chain; its full sequence is Triosephosphate isomerase (251 aa).

A substrate-binding site is contributed by Asn-8–Lys-10. The active-site Electrophile is the His-97. Glu-170 acts as the Proton acceptor in catalysis. Residues Gly-176, Ser-215, and Gly-236–Gly-237 each bind substrate.

Belongs to the triosephosphate isomerase family. Homodimer.

Its subcellular location is the cytoplasm. It catalyses the reaction D-glyceraldehyde 3-phosphate = dihydroxyacetone phosphate. It participates in carbohydrate biosynthesis; gluconeogenesis. The protein operates within carbohydrate degradation; glycolysis; D-glyceraldehyde 3-phosphate from glycerone phosphate: step 1/1. Involved in the gluconeogenesis. Catalyzes stereospecifically the conversion of dihydroxyacetone phosphate (DHAP) to D-glyceraldehyde-3-phosphate (G3P). This chain is Triosephosphate isomerase, found in Nitratidesulfovibrio vulgaris (strain DSM 19637 / Miyazaki F) (Desulfovibrio vulgaris).